Reading from the N-terminus, the 500-residue chain is Intracellular exo-alpha-(1-&gt;5)-L-arabinofuranosidase 1 (500 aa).

Alpha-L-arabinofuranose is bound by residues Glu-27, Asn-72, and Asn-172. Glu-173 (proton donor/acceptor) is an active-site residue. Tyr-244, Glu-292, and Gln-349 together coordinate alpha-L-arabinofuranose. Glu-292 acts as the Nucleophile in catalysis.

The protein belongs to the glycosyl hydrolase 51 family. Homohexamer; trimer of dimers.

The protein localises to the cytoplasm. It catalyses the reaction Hydrolysis of terminal non-reducing alpha-L-arabinofuranoside residues in alpha-L-arabinosides.. It carries out the reaction (20S)-ginsenoside Rc + H2O = L-arabinofuranose + (20S)-ginsenoside Rd. Its pathway is glycan metabolism; L-arabinan degradation. At a concentration of 5 mM, K(+), Cu(2+) and Ni(2+) exhibit inhibitory effects on the activity. Additionally, the chemical reagent SDS also displays a certain degree of inhibition. Enzymatic activity is largely unaffected by product feedback inhibition. In terms of biological role, involved in the degradation of arabinan and is a key enzyme in the complete degradation of the plant cell wall. Catalyzes the cleavage of terminal alpha-(1-&gt;5)-arabinofuranosyl bonds in different hemicellulosic homopolysaccharides (branched and debranched arabinans). It acts preferentially on arabinotriose, arabinobiose and linear alpha-(1-&gt;5)-L-arabinan, and is much less effective on branched sugar beet arabinan. When expressed in E.coli, the recombinant enyzme can hydrolyze, with relatively low catalytic efficiency, the terminal alpha-L-arabinofuranoside at the C20 position of ginsenoside Rc to produce ginsenoside Rd, a rare ginsenoside that exhibits diverse and powerful pharmacological activities. The protein is Intracellular exo-alpha-(1-&gt;5)-L-arabinofuranosidase 1 of Bacillus subtilis (strain 168).